Reading from the N-terminus, the 103-residue chain is Large ribosomal subunit protein eL14 (103 aa).

This sequence belongs to the eukaryotic ribosomal protein eL14 family.

This chain is Large ribosomal subunit protein eL14, found in Pyrobaculum neutrophilum (strain DSM 2338 / JCM 9278 / NBRC 100436 / V24Sta) (Thermoproteus neutrophilus).